Consider the following 115-residue polypeptide: Type 3 secretion system chaperone YscG (115 aa).

This sequence belongs to the YscG family. As to quaternary structure, component of the heterodimeric YscE-YscG chaperone. The YscE-YscG chaperone forms a stable ternary complex with YscF/SctF.

It localises to the cytoplasm. Chaperone of the type III secretion system (T3SS), also called injectisome, which is used to inject bacterial effector proteins into eukaryotic host cells. Along with YscE, prevents premature polymerization of the YscF/SctF needle protein within the cytoplasm. Required for Yop secretion. In Yersinia enterocolitica, this protein is Type 3 secretion system chaperone YscG.